A 318-amino-acid chain; its full sequence is Thymidylate synthase (318 aa).

DUMP-binding positions include Arg-25 and Arg-180–Arg-181. The active-site Nucleophile is Cys-200. DUMP is bound by residues Arg-220–Asp-223, Asn-231, and His-261–Tyr-263. Asp-223 contacts (6R)-5,10-methylene-5,6,7,8-tetrahydrofolate. Ala-317 contacts (6R)-5,10-methylene-5,6,7,8-tetrahydrofolate.

This sequence belongs to the thymidylate synthase family. Bacterial-type ThyA subfamily. As to quaternary structure, homodimer.

The protein resides in the cytoplasm. The enzyme catalyses dUMP + (6R)-5,10-methylene-5,6,7,8-tetrahydrofolate = 7,8-dihydrofolate + dTMP. Its pathway is pyrimidine metabolism; dTTP biosynthesis. Functionally, catalyzes the reductive methylation of 2'-deoxyuridine-5'-monophosphate (dUMP) to 2'-deoxythymidine-5'-monophosphate (dTMP) while utilizing 5,10-methylenetetrahydrofolate (mTHF) as the methyl donor and reductant in the reaction, yielding dihydrofolate (DHF) as a by-product. This enzymatic reaction provides an intracellular de novo source of dTMP, an essential precursor for DNA biosynthesis. The sequence is that of Thymidylate synthase from Lactobacillus helveticus (strain DPC 4571).